Reading from the N-terminus, the 125-residue chain is Small ribosomal subunit protein uS12 (125 aa).

Residues 1-30 form a disordered region; that stretch reads MPTISQLVRKPRAAKPLKSKVPALGNSPQK. Residues 9–18 are compositionally biased toward basic residues; it reads RKPRAAKPLK. A 3-methylthioaspartic acid modification is found at Asp89. Residues 103–125 are disordered; the sequence is DTAGVKDRKQGRSKYGAKKPKSA. Residues 113 to 125 show a composition bias toward basic residues; sequence GRSKYGAKKPKSA.

This sequence belongs to the universal ribosomal protein uS12 family. As to quaternary structure, part of the 30S ribosomal subunit. Contacts proteins S8 and S17. May interact with IF1 in the 30S initiation complex.

Functionally, with S4 and S5 plays an important role in translational accuracy. Interacts with and stabilizes bases of the 16S rRNA that are involved in tRNA selection in the A site and with the mRNA backbone. Located at the interface of the 30S and 50S subunits, it traverses the body of the 30S subunit contacting proteins on the other side and probably holding the rRNA structure together. The combined cluster of proteins S8, S12 and S17 appears to hold together the shoulder and platform of the 30S subunit. This chain is Small ribosomal subunit protein uS12, found in Nitrosospira multiformis (strain ATCC 25196 / NCIMB 11849 / C 71).